Consider the following 404-residue polypeptide: L-cysteine:1D-myo-inositol 2-amino-2-deoxy-alpha-D-glucopyranoside ligase 1 (404 aa).

C47 is a Zn(2+) binding site. L-cysteinyl-5'-AMP is bound by residues 47–50 (CGIT), T62, and 85–87 (NIT). The 'HIGH' region signature appears at 49-59 (ITPYDSTHLGH). The short motif at 188-193 (ERGGDP) is the 'ERGGDP' region element. W228 contacts L-cysteinyl-5'-AMP. C232 serves as a coordination point for Zn(2+). Position 250–252 (250–252 (GSD)) interacts with L-cysteinyl-5'-AMP. H257 contributes to the Zn(2+) binding site. I284 contributes to the L-cysteinyl-5'-AMP binding site. The 'KMSKS' region motif lies at 290-294 (KMSKS).

This sequence belongs to the class-I aminoacyl-tRNA synthetase family. MshC subfamily. In terms of assembly, monomer. It depends on Zn(2+) as a cofactor.

It carries out the reaction 1D-myo-inositol 2-amino-2-deoxy-alpha-D-glucopyranoside + L-cysteine + ATP = 1D-myo-inositol 2-(L-cysteinylamino)-2-deoxy-alpha-D-glucopyranoside + AMP + diphosphate + H(+). Catalyzes the ATP-dependent condensation of GlcN-Ins and L-cysteine to form L-Cys-GlcN-Ins. In Corynebacterium jeikeium (strain K411), this protein is L-cysteine:1D-myo-inositol 2-amino-2-deoxy-alpha-D-glucopyranoside ligase 1.